A 917-amino-acid chain; its full sequence is Hexokinase-2 (917 aa).

Met1 carries the post-translational modification N-acetylmethionine. The mitochondrial-binding peptide (MBP) stretch occupies residues 1–16; it reads MIASHLLAYFFTELNH. 2 Hexokinase domains span residues 16–458 and 464–906; these read HDQV…MVTA and ADQH…LITA. ATP-binding positions include Arg30 and 84–89; that span reads DLGGTN. The segment at 73–207 is hexokinase small subdomain 1; that stretch reads DGTEHGEFLA…DFDIDIVAVV (135 aa). 84-88 contacts D-glucose 6-phosphate; that stretch reads DLGGT. Residues 155–156, 172–173, and 208–209 contribute to the D-glucose site; these read SF, TK, and ND. Positions 208 to 447 are hexokinase large subdomain 1; that stretch reads NDTVGTMMTC…CDVRFLRSED (240 aa). Residues Asp209 and Thr232 each contribute to the D-glucose 6-phosphate site. Residues Asn235, Glu260, and 291 to 294 contribute to the D-glucose site; that span reads QLFE. D-glucose 6-phosphate is bound at residue 413-415; sequence DGS. Residue 425-426 coordinates ATP; the sequence is KR. D-glucose 6-phosphate-binding positions include Ser449 and 532–536; that span reads DLGGT. A hexokinase small subdomain 2 region spans residues 521 to 655; the sequence is DGTEKGDFLA…EFDLDVVAVV (135 aa). 532–537 is a binding site for ATP; it reads DLGGTN. D-glucose is bound by residues 603 to 604, 620 to 621, and 656 to 657; these read SF, TK, and ND. Residues 656–895 are hexokinase large subdomain 2; the sequence is NDTVGTMMTC…CDVSFLQSED (240 aa). D-glucose 6-phosphate is bound by residues Asp657 and Thr680. ATP is bound at residue Thr680. D-glucose is bound by residues 682-683, Glu708, and 739-742; these read SN and QRFE. ATP contacts are provided by residues 747 to 748, 784 to 788, and 863 to 867; these read GM, TKFLS, and TLYKL. D-glucose 6-phosphate-binding positions include 861-863 and Ser897; that span reads DGT.

The protein belongs to the hexokinase family. In terms of assembly, monomer. Interacts with TIGAR; the interaction increases hexokinase activity in a hypoxia- and HIF1A-dependent manner. In terms of tissue distribution, predominant hexokinase isozyme expressed in insulin-responsive tissues such as skeletal muscle.

The protein localises to the mitochondrion outer membrane. The protein resides in the cytoplasm. Its subcellular location is the cytosol. The catalysed reaction is a D-hexose + ATP = a D-hexose 6-phosphate + ADP + H(+). It catalyses the reaction D-fructose + ATP = D-fructose 6-phosphate + ADP + H(+). The enzyme catalyses D-glucose + ATP = D-glucose 6-phosphate + ADP + H(+). It functions in the pathway carbohydrate metabolism; hexose metabolism. The protein operates within carbohydrate degradation; glycolysis; D-glyceraldehyde 3-phosphate and glycerone phosphate from D-glucose: step 1/4. With respect to regulation, hexokinase activity is specifically inhibited by 2,6-disubstituted glucosamines. In terms of biological role, catalyzes the phosphorylation of hexose, such as D-glucose and D-fructose, to hexose 6-phosphate (D-glucose 6-phosphate and D-fructose 6-phosphate, respectively). Mediates the initial step of glycolysis by catalyzing phosphorylation of D-glucose to D-glucose 6-phosphate. Plays a key role in maintaining the integrity of the outer mitochondrial membrane by preventing the release of apoptogenic molecules from the intermembrane space and subsequent apoptosis. In Homo sapiens (Human), this protein is Hexokinase-2.